Here is a 778-residue protein sequence, read N- to C-terminus: Protein translocase subunit SecA 2 (778 aa).

ATP is bound by residues Gln-94, 112–116, and Asp-501; that span reads GEGKT.

Belongs to the SecA family. As to quaternary structure, monomer and homodimer. Part of the essential Sec protein translocation apparatus which comprises SecA, SecYEG and auxiliary proteins SecDF. Other proteins may also be involved.

It localises to the cell membrane. It is found in the cytoplasm. It carries out the reaction ATP + H2O + cellular proteinSide 1 = ADP + phosphate + cellular proteinSide 2.. Part of the Sec protein translocase complex. Interacts with the SecYEG preprotein conducting channel. Has a central role in coupling the hydrolysis of ATP to the transfer of proteins into and across the cell membrane, serving as an ATP-driven molecular motor driving the stepwise translocation of polypeptide chains across the membrane. This Mycobacterium leprae (strain TN) protein is Protein translocase subunit SecA 2.